The primary structure comprises 344 residues: Follistatin (344 aa).

Positions 1–29 (MVCARHQPGGLCLLLLLLCQFMEDRSAQA) are cleaved as a signal peptide. Residues 30 to 103 (GNCWLRQAKN…TCENVDCGPG (74 aa)) form the TB domain. Cystine bridges form between cysteine 32–cysteine 55, cysteine 42–cysteine 88, cysteine 56–cysteine 91, cysteine 95–cysteine 106, cysteine 100–cysteine 116, cysteine 118–cysteine 150, cysteine 122–cysteine 143, cysteine 132–cysteine 164, cysteine 168–cysteine 179, cysteine 173–cysteine 189, cysteine 192–cysteine 225, cysteine 196–cysteine 218, cysteine 207–cysteine 239, cysteine 245–cysteine 256, cysteine 250–cysteine 267, cysteine 270–cysteine 302, cysteine 274–cysteine 295, and cysteine 284–cysteine 316. Residues 94–117 (TCENVDCGPGKKCRMNKKNKPRCV) enclose the Follistatin-like 1 domain. The 55-residue stretch at 112–166 (NKPRCVCAPDCSNITWKGPVCGLDGKTYRNECALLKARCKEQPELEVQYQGKCKK) folds into the Kazal-like 1 domain. The N-linked (GlcNAc...) asparagine glycan is linked to asparagine 124. A Follistatin-like 2 domain is found at 167-190 (TCRDVFCPGSSTCVVDQTNNAYCV). The Kazal-like 2 domain maps to 186–241 (NAYCVTCNRICPEPSSSEQSLCGNDGVTYSSACHLRKATCLLGRSIGLAYEGKCIK). Residues 244–268 (SCEDIQCGGGKKCLWDFKVGRGRCS) form the Follistatin-like 3 domain. Residues 264-318 (RGRCSLCDELCPDSKSDEPVCASDNATYASECAMKEAACSSGVLLEVKHSGSCNS) enclose the Kazal-like 3 domain. Asparagine 288 carries N-linked (GlcNAc...) asparagine glycosylation. A disordered region spans residues 315–344 (SCNSISEETEEEEEEEDQDYSFPISSTLEW). Residues 321–333 (EETEEEEEEEDQD) show a composition bias toward acidic residues.

As to quaternary structure, interacts with GDF11. Interacts with activin A/INHBA. Interacts with myostatin/MSTN.

Its subcellular location is the secreted. The protein localises to the nucleus. It is found in the nucleolus. Its function is as follows. Multifunctional regulatory protein whose primary function is to antagonize members of the transforming growth factor beta (TGF-beta) superfamily including activin, myostatin, GDF11 or bone morphogenetic proteins (BMPs). Mechanistically, binds to these ligands in the extracellular space, blocking their type II receptor-binding site to inhibit downstream signaling. Plays an essential role in muscle fiber formation and growth both by preventing the repressive effects of myostatin and through SMAD3/AKT/mTOR signaling independently of myostatin. Also promotes neural differentiation by antagonizing the action BMP4. Acts as a specific inhibitor of the biosynthesis and secretion of pituitary follicle stimulating hormone (FSH) by sequestering activin A/INHBA. On the other hand, translocates into the nucleus where it down-regulates rRNA synthesis and ribosome biogenesis to maintain cellular energy homeostasis by binding to rDNA. The protein is Follistatin of Rattus norvegicus (Rat).